The primary structure comprises 416 residues: Peptide chain release factor subunit 1 (416 aa).

This sequence belongs to the eukaryotic release factor 1 family. Heterodimer of two subunits, one of which binds GTP.

The protein localises to the cytoplasm. Its function is as follows. Directs the termination of nascent peptide synthesis (translation) in response to the termination codons UAA, UAG and UGA. The chain is Peptide chain release factor subunit 1 from Halobacterium salinarum (strain ATCC 29341 / DSM 671 / R1).